We begin with the raw amino-acid sequence, 580 residues long: Kelch-like protein 38 (580 aa).

A BTB domain is found at 34–101 (TDVSICSGAC…VYTGEVHISA (68 aa)). In terms of domain architecture, BACK spans 136 to 237 (CLGLVRLAEI…HPAFFHHFIA (102 aa)). 6 Kelch repeats span residues 284-331 (FLLL…TLHR), 333-382 (VYVL…THRN), 383-430 (FIFS…VKDQ), 432-478 (LYLF…VLGE), 479-520 (KIII…VMGN), and 522-572 (LYVT…TLQC).

The sequence is that of Kelch-like protein 38 (Klhl38) from Rattus norvegicus (Rat).